A 549-amino-acid polypeptide reads, in one-letter code: NAC domain-containing protein 53 (549 aa).

In terms of domain architecture, NAC spans 9 to 159 (LAPGFRFHPT…AFVLCRIFQK (151 aa)). A DNA-binding region spans residues 108–165 (VGMKKTLVYHKGRAPRGERTNWVMHEYRLVDQDLDKTGVHQDAFVLCRIFQKSGSGPK). Residues 395–416 (LEKEETSRSKHVVEEKEKDEAS) show a composition bias toward basic and acidic residues. Residues 395–418 (LEKEETSRSKHVVEEKEKDEASCS) form a disordered region. The helical transmembrane segment at 526 to 546 (LIFMCFWVLLLSVSFKVSILV) threads the bilayer.

Expressed in roots, rosette leaves, cauline leaves, shoot apex and stems.

It is found in the endoplasmic reticulum membrane. The protein resides in the nucleus. Its function is as follows. Transcriptional activator activated by proteolytic cleavage through regulated intramembrane proteolysis (RIP). Promotes reactive oxygen species (ROS) production during drought-induced leaf senescence. In response to abscisic acid (ABA)-mediated drought stress signals, binds directly to the promoters of RBOHC and RBOHE genes, encoding ROS biosynthetic enzymes, resulting in ROS accumulation and triggering leaf senescence via programmed cell death (PCD). ROS-induced leaf senescence sustains plant survival under drought conditions. Involved in heat stress response. Modulates PCD through a ROS-mediated positive feedback control under heat stress conditions. This may provide an adaptation strategy for plant survival under extreme heat stress conditions. Acts as a repressor in preventing anther dehiscence during stamen development by suppressing genes that participate in jasmonic acid (JA) biosynthesis, such as DAD1, AOS, AOC3, OPR3 and 4CLL5/OPCL1. This Arabidopsis thaliana (Mouse-ear cress) protein is NAC domain-containing protein 53.